An 871-amino-acid chain; its full sequence is Ubiquitin carboxyl-terminal hydrolase 8 (871 aa).

The 96-residue stretch at 4–99 folds into the DUSP domain; that stretch reads TSPDESPDST…GETGEASVSG (96 aa). The USP domain occupies 279 to 869; it reads TGLQNLGNTC…AAYVLFYKRL (591 aa). The active-site Nucleophile is Cys288. The tract at residues 615–650 is disordered; that stretch reads ENLENPTEEEATDKTDTDGTTSVEDTNSTDVKETTE. Catalysis depends on His828, which acts as the Proton acceptor.

It belongs to the peptidase C19 family.

The catalysed reaction is Thiol-dependent hydrolysis of ester, thioester, amide, peptide and isopeptide bonds formed by the C-terminal Gly of ubiquitin (a 76-residue protein attached to proteins as an intracellular targeting signal).. Functionally, recognizes and hydrolyzes the peptide bond at the C-terminal Gly of ubiquitin. Involved in the processing of poly-ubiquitin precursors as well as that of ubiquitinated proteins. The protein is Ubiquitin carboxyl-terminal hydrolase 8 (UBP8) of Arabidopsis thaliana (Mouse-ear cress).